The primary structure comprises 172 residues: Adenine phosphoribosyltransferase (172 aa).

This sequence belongs to the purine/pyrimidine phosphoribosyltransferase family. Homodimer.

It localises to the cytoplasm. The enzyme catalyses AMP + diphosphate = 5-phospho-alpha-D-ribose 1-diphosphate + adenine. Its pathway is purine metabolism; AMP biosynthesis via salvage pathway; AMP from adenine: step 1/1. Catalyzes a salvage reaction resulting in the formation of AMP, that is energically less costly than de novo synthesis. In Staphylococcus haemolyticus (strain JCSC1435), this protein is Adenine phosphoribosyltransferase.